The chain runs to 138 residues: Basic phospholipase A2 ammodytoxin C (138 aa).

A signal peptide spans 1-16 (MRTLWIVAVCLIGVEG). 7 disulfides stabilise this stretch: Cys42–Cys131, Cys44–Cys60, Cys59–Cys111, Cys65–Cys138, Cys66–Cys104, Cys73–Cys97, and Cys91–Cys102. Residues Tyr43, Gly45, and Gly47 each contribute to the Ca(2+) site. His63 is a catalytic residue. Residue Asp64 participates in Ca(2+) binding. Residue Asp105 is part of the active site.

The protein belongs to the phospholipase A2 family. Group II subfamily. D49 sub-subfamily. Monomer. Binds to calmodulin, coagulation factor X (F10), 14-3-3 proteins gamma (YWHAG) and epsilon (YWHAE), and R25, a mitochondrial membrane protein. May bind to M-type PLA2 receptor (R-180). Ca(2+) serves as cofactor. In terms of tissue distribution, expressed by the venom gland.

It is found in the secreted. Its subcellular location is the host cytoplasm. It localises to the host cytosol. It carries out the reaction a 1,2-diacyl-sn-glycero-3-phosphocholine + H2O = a 1-acyl-sn-glycero-3-phosphocholine + a fatty acid + H(+). Its function is as follows. Snake venom phospholipase A2 (PLA2) that acts as a presynaptic neurotoxin, an inhibitor of blood coagulation, and has been found to bind with high affinity to intracellular proteins. The response of indirectly stimulated neuromuscular preparations to ammodytoxin (Atx) is triphasic. The first phase, the transient inhibition of the acetylcholine (ACh) release, starts soon after the addition of Atx and lasts for several minutes. This phase is probably independent of Atx enzymatic activity. The effect may be due to the specific binding of the toxin to presynaptic receptors. These receptors, called N-type receptors, are still unidentified. It is noteworthy that a neuronal isoform of the M-type PLA2 receptor (R180) has been identified as a high-affinity receptor for Atx in neuronal plasma membranes. It was demonstrated however that this receptor is not essential for expression of neurotoxicity by Atx. The second phase corresponds to an augmentation of neurotransmitter release. A peak is reached 10-20 minutes after exposure of the preparation to Atx and is followed by a gradual reduction. In this phase, the enzymatic activity of Atx of the mammalian is not significant. It is speculated that the increased release of neurotransmitter in this phase is induced by the interference of Atx with voltage-gated potassium channels. Measurements of ionic showed however that voltage-gated potassium channels are not affected by Atx. The third phase of the response of neuromuscular preparations to Atx, which corresponds to a complete and irreversible paralysis, is clearly dependent on the hydrolytic activity of the toxin. In addition to its presynaptic neurotoxicity, Atx shows an anticoagulant activity by binding with high affinity to activated coagulation factor X (F10) thus inhibiting the formation of the prothrombinase complex (FX/FV) and its activity (IC(50) is 240 nM). Surprisingly, Atx was discovered to bind intracellular proteins such as calmodulin (CaM), 14-3-3 proteins gamma (YWHAG) and epsilon (YWHAE), as well as R25, a mitochondrial integral membrane protein found in cerebral cortex. These findings raised a doubt about the dogma of the exclusively extracellular action of PLA2s, defended by the potential instability of these molecules in the reducing environment of the eukaryotic cytosol coupled with their possible inability to act as enzymes in this cellular compartment, due to too low concentration of calcium ions. This hypothesis was challenged efficiently by demonstrating the internalization of AtxA into a culture cells, but still remains to be directly demonstrated in vivo. PLA2 catalyzes the calcium-dependent hydrolysis of the 2-acyl groups in 3-sn-phosphoglycerides. This Vipera ammodytes ammodytes (Western sand viper) protein is Basic phospholipase A2 ammodytoxin C.